We begin with the raw amino-acid sequence, 351 residues long: uncharacterized protein (351 aa).

Asp-215, Asp-226, His-290, Glu-319, and Glu-333 together coordinate Mn(2+).

Belongs to the peptidase M24B family. It depends on Mn(2+) as a cofactor.

This is an uncharacterized protein from Staphylococcus aureus (strain MW2).